A 699-amino-acid chain; its full sequence is Elongation factor G 2 (699 aa).

Positions E8 to T290 constitute a tr-type G domain. Residues A17–T24, D88–H92, and N142–D145 each bind GTP.

It belongs to the TRAFAC class translation factor GTPase superfamily. Classic translation factor GTPase family. EF-G/EF-2 subfamily.

It is found in the cytoplasm. Its function is as follows. Catalyzes the GTP-dependent ribosomal translocation step during translation elongation. During this step, the ribosome changes from the pre-translocational (PRE) to the post-translocational (POST) state as the newly formed A-site-bound peptidyl-tRNA and P-site-bound deacylated tRNA move to the P and E sites, respectively. Catalyzes the coordinated movement of the two tRNA molecules, the mRNA and conformational changes in the ribosome. This Colwellia psychrerythraea (strain 34H / ATCC BAA-681) (Vibrio psychroerythus) protein is Elongation factor G 2.